Here is a 94-residue protein sequence, read N- to C-terminus: Co-chaperonin GroES (94 aa).

This sequence belongs to the GroES chaperonin family. Heptamer of 7 subunits arranged in a ring. Interacts with the chaperonin GroEL.

The protein resides in the cytoplasm. In terms of biological role, together with the chaperonin GroEL, plays an essential role in assisting protein folding. The GroEL-GroES system forms a nano-cage that allows encapsulation of the non-native substrate proteins and provides a physical environment optimized to promote and accelerate protein folding. GroES binds to the apical surface of the GroEL ring, thereby capping the opening of the GroEL channel. The chain is Co-chaperonin GroES from Lactococcus lactis subsp. lactis (strain IL1403) (Streptococcus lactis).